The primary structure comprises 165 residues: Transcription elongation factor GreA (165 aa).

The stretch at 55–78 (AAKEEQGKQELRVRQLTQLLENAK) forms a coiled coil.

Belongs to the GreA/GreB family.

In terms of biological role, necessary for efficient RNA polymerase transcription elongation past template-encoded arresting sites. The arresting sites in DNA have the property of trapping a certain fraction of elongating RNA polymerases that pass through, resulting in locked ternary complexes. Cleavage of the nascent transcript by cleavage factors such as GreA or GreB allows the resumption of elongation from the new 3'terminus. GreA releases sequences of 2 to 3 nucleotides. The protein is Transcription elongation factor GreA of Streptomyces avermitilis (strain ATCC 31267 / DSM 46492 / JCM 5070 / NBRC 14893 / NCIMB 12804 / NRRL 8165 / MA-4680).